A 307-amino-acid chain; its full sequence is sn-1-specific diacylglycerol lipase ABHD11 (307 aa).

The transit peptide at 1 to 34 (MLRWARAWRVPRGVLGASSPRRLAVPVTFCSSRS) directs the protein to the mitochondrion. Lysine 79 carries the post-translational modification N6-succinyllysine. Residue serine 133 is the Charge relay system of the active site. Lysine 196 is subject to N6-succinyllysine. Active-site charge relay system residues include aspartate 229 and histidine 288.

The protein belongs to the AB hydrolase superfamily. In terms of assembly, interacts with OGDH and DLST; this interaction maintains the functional lipoylation of the 2-oxoglutarate dehydrogenase complex. Post-translationally, phosphorylated. As to expression, expressed in white adipose tissues.

It localises to the mitochondrion. The protein localises to the mitochondrion matrix. It catalyses the reaction 1-octadecanoyl-2-(5Z,8Z,11Z,14Z-eicosatetraenoyl)-sn-glycerol + H2O = 2-(5Z,8Z,11Z,14Z-eicosatetraenoyl)-glycerol + octadecanoate + H(+). It carries out the reaction a 1,2-diacyl-sn-glycerol + H2O = a 2-acylglycerol + a fatty acid + H(+). The catalysed reaction is a 1,3-diacyl-sn-glycerol + H2O = a 1-acyl-sn-glycerol + a fatty acid + H(+). The enzyme catalyses 1-octadecanoyl-2-(9Z-octadecenoyl)-sn-glycerol + H2O = 2-(9Z-octadecenoyl)-glycerol + octadecanoate + H(+). It catalyses the reaction 1-octadecanoyl-2-(4Z,7Z,10Z,13Z,16Z,19Z-docosahexaenoyl)-sn-glycerol + H2O = 2-(4Z,7Z,10Z,13Z,16Z,19Z-docosahexaenoyl)-glycerol + octadecanoate + H(+). It carries out the reaction 1,2-didecanoylglycerol + H2O = decanoylglycerol + decanoate + H(+). Its function is as follows. Catalyzes the hydrolysis of diacylglycerol in vitro and may function as a key regulator in lipid metabolism, namely by regulating the intracellular levels of diacylglycerol. 1,2-diacyl-sn-glycerols are the preferred substrate over 1,3-diacyl-sn-glycerols. The enzyme hydrolyzes stearate in preference to palmitate from the sn-1 position of 1,2-diacyl-sn-glycerols. Maintains the functional lipoylation of the 2-oxoglutarate dehydrogenase complex (OGDHc) through its interaction with the OGDHc by preventing the formation of lipoyl adducts. In addition, is also required for the expansion and differentiation of embryonic stem cells (ESCs). The polypeptide is sn-1-specific diacylglycerol lipase ABHD11 (Mus musculus (Mouse)).